The chain runs to 460 residues: N-myc proto-oncogene protein (460 aa).

An interaction with AURKA region spans residues 19–47 (LEFDSLQPCFYPDEDDFYFGGPDSTPPGE). Residues 61-90 (LSPSRAFSEQSPEPSDWATEMLLPEADLWG) form an interaction with AURKA and FBXW7 region. The 9aaTAD motif lies at 76–85 (DWATEMLLPE). Disordered stretches follow at residues 131 to 169 (VSEK…GAGR), 221 to 288 (AAAP…SNSK), and 330 to 388 (APSP…LERQ). The span at 138–158 (GRGPPAAGPATPGAGAANPAG) shows a compositional bias: low complexity. The span at 159–169 (RGHGGTAGAGR) shows a compositional bias: gly residues. Positions 221–233 (AAAPASAAVAAPP) are enriched in low complexity. A compositionally biased stretch (acidic residues) spans 255-274 (TLSDSDDEDDEEEDEEEEID). 2 positions are modified to phosphoserine; by CK2: Ser257 and Ser259. Residues 377–429 (ERRRNHNILERQRRNDLRSSFLTLRDHVPELVKNEKAAKVVILKKATEYVHSL) form the bHLH domain. Residues 429–450 (LQAEEHQLLLEKEKLQARQQQL) are leucine-zipper.

In terms of assembly, efficient DNA binding requires dimerization with another bHLH protein. Binds DNA as a heterodimer with MAX. Interacts with KDM5A, KDM5B and HUWE1. Interacts with MYCNOS. Interacts with AURKA; interaction is phospho-independent and triggers AURKA activation; AURKA competes with FBXW7 for binding to unphosphorylated MYCN but not for binding to unphosphorylated MYCN. Interacts with FBXW7; FBXW7 competes with AURKA for binding to unphosphorylated MYCN but not for binding to phosphorylated MYCN. In terms of processing, phosphorylated by GSK3-beta which may promote its degradation. Phosphorylated by AURKA.

It localises to the nucleus. Its function is as follows. Positively regulates the transcription of MYCNOS in neuroblastoma cells. The polypeptide is N-myc proto-oncogene protein (MYCN) (Marmota monax (Woodchuck)).